A 210-amino-acid polypeptide reads, in one-letter code: Outer-membrane lipoprotein LolB (210 aa).

Positions 1-29 (MSLISNNEERSLRVRYCIAIALSALLISG) are cleaved as a signal peptide. Residue cysteine 30 is the site of N-palmitoyl cysteine attachment. Cysteine 30 carries S-diacylglycerol cysteine lipidation.

Belongs to the LolB family. As to quaternary structure, monomer.

It is found in the cell outer membrane. Plays a critical role in the incorporation of lipoproteins in the outer membrane after they are released by the LolA protein. This Coxiella burnetii (strain CbuK_Q154) (Coxiella burnetii (strain Q154)) protein is Outer-membrane lipoprotein LolB.